Here is a 313-residue protein sequence, read N- to C-terminus: Aspartoacylase (313 aa).

Zn(2+) contacts are provided by histidine 21 and glutamate 24. Positions 63, 70, and 71 each coordinate N-acetyl-L-aspartate. A Zn(2+)-binding site is contributed by histidine 116. N-acetyl-L-aspartate is bound by residues tyrosine 164 and arginine 168. Glutamate 178 acts as the Proton donor/acceptor in catalysis. Tyrosine 288 contacts N-acetyl-L-aspartate.

It belongs to the AspA/AstE family. Aspartoacylase subfamily. As to quaternary structure, homodimer. The cofactor is Zn(2+).

Its subcellular location is the cytoplasm. The protein localises to the nucleus. It catalyses the reaction an N-acyl-L-aspartate + H2O = a carboxylate + L-aspartate. The enzyme catalyses N-acetyl-L-aspartate + H2O = L-aspartate + acetate. Its function is as follows. Catalyzes the deacetylation of N-acetylaspartic acid (NAA) to produce acetate and L-aspartate. NAA occurs in high concentration in brain and its hydrolysis NAA plays a significant part in the maintenance of intact white matter. In other tissues it acts as a scavenger of NAA from body fluids. This is Aspartoacylase from Pongo abelii (Sumatran orangutan).